The following is a 94-amino-acid chain: Small ribosomal subunit protein uS19 (94 aa).

It belongs to the universal ribosomal protein uS19 family.

In terms of biological role, protein S19 forms a complex with S13 that binds strongly to the 16S ribosomal RNA. This Pelotomaculum thermopropionicum (strain DSM 13744 / JCM 10971 / SI) protein is Small ribosomal subunit protein uS19.